Consider the following 459-residue polypeptide: Bifunctional protein GlmU (459 aa).

The interval 1–229 (MTNYAIILAA…FDESLGVNDR (229 aa)) is pyrophosphorylase. UDP-N-acetyl-alpha-D-glucosamine contacts are provided by residues 8–11 (LAAG), Lys22, Gln72, and 77–78 (GT). Asp102 provides a ligand contact to Mg(2+). 4 residues coordinate UDP-N-acetyl-alpha-D-glucosamine: Gly139, Glu154, Asn169, and Asn227. Asn227 provides a ligand contact to Mg(2+). A linker region spans residues 230–250 (VALATAESVMRRRINQKHMVN). Residues 251–459 (GVSFVNPDAT…KRLPHHPQNK (209 aa)) are N-acetyltransferase. UDP-N-acetyl-alpha-D-glucosamine is bound by residues Arg332 and Lys350. The active-site Proton acceptor is His362. UDP-N-acetyl-alpha-D-glucosamine contacts are provided by Tyr365 and Asn376. Acetyl-CoA-binding positions include Ala379, 385–386 (NY), Ser404, Ala422, and Arg439.

The protein in the N-terminal section; belongs to the N-acetylglucosamine-1-phosphate uridyltransferase family. It in the C-terminal section; belongs to the transferase hexapeptide repeat family. As to quaternary structure, homotrimer. Requires Mg(2+) as cofactor.

The protein localises to the cytoplasm. The enzyme catalyses alpha-D-glucosamine 1-phosphate + acetyl-CoA = N-acetyl-alpha-D-glucosamine 1-phosphate + CoA + H(+). It catalyses the reaction N-acetyl-alpha-D-glucosamine 1-phosphate + UTP + H(+) = UDP-N-acetyl-alpha-D-glucosamine + diphosphate. The protein operates within nucleotide-sugar biosynthesis; UDP-N-acetyl-alpha-D-glucosamine biosynthesis; N-acetyl-alpha-D-glucosamine 1-phosphate from alpha-D-glucosamine 6-phosphate (route II): step 2/2. It participates in nucleotide-sugar biosynthesis; UDP-N-acetyl-alpha-D-glucosamine biosynthesis; UDP-N-acetyl-alpha-D-glucosamine from N-acetyl-alpha-D-glucosamine 1-phosphate: step 1/1. Its pathway is bacterial outer membrane biogenesis; LPS lipid A biosynthesis. Catalyzes the last two sequential reactions in the de novo biosynthetic pathway for UDP-N-acetylglucosamine (UDP-GlcNAc). The C-terminal domain catalyzes the transfer of acetyl group from acetyl coenzyme A to glucosamine-1-phosphate (GlcN-1-P) to produce N-acetylglucosamine-1-phosphate (GlcNAc-1-P), which is converted into UDP-GlcNAc by the transfer of uridine 5-monophosphate (from uridine 5-triphosphate), a reaction catalyzed by the N-terminal domain. This Streptococcus gordonii (strain Challis / ATCC 35105 / BCRC 15272 / CH1 / DL1 / V288) protein is Bifunctional protein GlmU.